The chain runs to 186 residues: Dihydrofolate reductase (186 aa).

The DHFR domain occupies 3–184 (PLNCIVAVSQ…IKYKFEVYEK (182 aa)). NADP(+)-binding positions include A9 and 15–21 (GIGKNGD). Substrate is bound at residue 30-35 (EYKYFQ). K32 carries the post-translational modification N6-acetyllysine; alternate. Position 32 is an N6-succinyllysine; alternate (K32). 54 to 56 (RKT) contacts NADP(+). A substrate-binding site is contributed by R70. Residues 76-78 (SRE) and 116-123 (GGSSVYKE) contribute to the NADP(+) site. C162 is modified (cysteine derivative; partial).

The protein belongs to the dihydrofolate reductase family. In terms of assembly, homodimer.

Its subcellular location is the mitochondrion. The protein resides in the cytoplasm. It catalyses the reaction (6S)-5,6,7,8-tetrahydrofolate + NADP(+) = 7,8-dihydrofolate + NADPH + H(+). It participates in cofactor biosynthesis; tetrahydrofolate biosynthesis; 5,6,7,8-tetrahydrofolate from 7,8-dihydrofolate: step 1/1. Its function is as follows. Key enzyme in folate metabolism. Contributes to the de novo mitochondrial thymidylate biosynthesis pathway. Catalyzes an essential reaction for de novo glycine and purine synthesis, and for DNA precursor synthesis. Binds its own mRNA and that of DHFR2. This Sus scrofa (Pig) protein is Dihydrofolate reductase (DHFR).